The sequence spans 55 residues: ATP synthase F(0) complex subunit 8 (55 aa).

A helical transmembrane segment spans residues 4–24 (LNPAPWFAILVFSWLVFLTVI). A disordered region spans residues 36–55 (EPTSQSTEKTKPEPWNWPWH).

This sequence belongs to the ATPase protein 8 family. Component of the ATP synthase complex composed at least of ATP5F1A/subunit alpha, ATP5F1B/subunit beta, ATP5MC1/subunit c (homooctomer), MT-ATP6/subunit a, MT-ATP8/subunit 8, ATP5ME/subunit e, ATP5MF/subunit f, ATP5MG/subunit g, ATP5MK/subunit k, ATP5MJ/subunit j, ATP5F1C/subunit gamma, ATP5F1D/subunit delta, ATP5F1E/subunit epsilon, ATP5PF/subunit F6, ATP5PB/subunit b, ATP5PD/subunit d, ATP5PO/subunit OSCP. ATP synthase complex consists of a soluble F(1) head domain (subunits alpha(3) and beta(3)) - the catalytic core - and a membrane F(0) domain - the membrane proton channel (subunits c, a, 8, e, f, g, k and j). These two domains are linked by a central stalk (subunits gamma, delta, and epsilon) rotating inside the F1 region and a stationary peripheral stalk (subunits F6, b, d, and OSCP).

It localises to the mitochondrion membrane. Subunit 8, of the mitochondrial membrane ATP synthase complex (F(1)F(0) ATP synthase or Complex V) that produces ATP from ADP in the presence of a proton gradient across the membrane which is generated by electron transport complexes of the respiratory chain. ATP synthase complex consist of a soluble F(1) head domain - the catalytic core - and a membrane F(1) domain - the membrane proton channel. These two domains are linked by a central stalk rotating inside the F(1) region and a stationary peripheral stalk. During catalysis, ATP synthesis in the catalytic domain of F(1) is coupled via a rotary mechanism of the central stalk subunits to proton translocation. In vivo, can only synthesize ATP although its ATP hydrolase activity can be activated artificially in vitro. Part of the complex F(0) domain. The sequence is that of ATP synthase F(0) complex subunit 8 from Salvelinus alpinus (Arctic char).